The chain runs to 155 residues: Cytochrome c-type biogenesis protein CcmE (155 aa).

Topologically, residues 1-8 (MNPIRKKR) are cytoplasmic. Residues 9–29 (LYWILALLCGVSIAMALALSA) traverse the membrane as a helical; Signal-anchor for type II membrane protein segment. Over 30–155 (LQENINLFYT…PKRVKQESTR (126 aa)) the chain is Periplasmic. Heme is bound by residues histidine 124 and tyrosine 128.

It belongs to the CcmE/CycJ family.

Its subcellular location is the cell inner membrane. Its function is as follows. Heme chaperone required for the biogenesis of c-type cytochromes. Transiently binds heme delivered by CcmC and transfers the heme to apo-cytochromes in a process facilitated by CcmF and CcmH. The polypeptide is Cytochrome c-type biogenesis protein CcmE (Janthinobacterium sp. (strain Marseille) (Minibacterium massiliensis)).